The chain runs to 132 residues: MKKTGILNSHLAKLADDLGHTDQVCIGDLGLPVPNGIPKIDLSLTSGVPSFQEVLDIYLENILVEKVILAEEIKEANPDQLSRLLAKLDNSVSIEYVSHDHLKQMTQDVKAVIRTGENTPYSNIILQSGVII.

Histidine 20 (proton donor) is an active-site residue. Residues aspartate 28, histidine 99, and tyrosine 121 to asparagine 123 each bind substrate.

The protein belongs to the RbsD / FucU family. RbsD subfamily. As to quaternary structure, homodecamer.

The protein resides in the cytoplasm. The enzyme catalyses beta-D-ribopyranose = beta-D-ribofuranose. It functions in the pathway carbohydrate metabolism; D-ribose degradation; D-ribose 5-phosphate from beta-D-ribopyranose: step 1/2. In terms of biological role, catalyzes the interconversion of beta-pyran and beta-furan forms of D-ribose. The sequence is that of D-ribose pyranase from Streptococcus agalactiae serotype Ia (strain ATCC 27591 / A909 / CDC SS700).